We begin with the raw amino-acid sequence, 556 residues long: Arginine--tRNA ligase (556 aa).

The 'HIGH' region motif lies at 132 to 142; sequence ANPTGDLHLGH.

The protein belongs to the class-I aminoacyl-tRNA synthetase family. In terms of assembly, monomer.

The protein localises to the cytoplasm. It catalyses the reaction tRNA(Arg) + L-arginine + ATP = L-arginyl-tRNA(Arg) + AMP + diphosphate. This is Arginine--tRNA ligase from Listeria monocytogenes serotype 4b (strain CLIP80459).